The following is a 324-amino-acid chain: Beta-ketoacyl-[acyl-carrier-protein] synthase III (324 aa).

Catalysis depends on residues C113 and H251. Residues 252–256 (QANKR) form an ACP-binding region. The active site involves N281.

Belongs to the thiolase-like superfamily. FabH family. As to quaternary structure, homodimer.

The protein localises to the cytoplasm. The enzyme catalyses malonyl-[ACP] + acetyl-CoA + H(+) = 3-oxobutanoyl-[ACP] + CO2 + CoA. Its pathway is lipid metabolism; fatty acid biosynthesis. Functionally, catalyzes the condensation reaction of fatty acid synthesis by the addition to an acyl acceptor of two carbons from malonyl-ACP. Catalyzes the first condensation reaction which initiates fatty acid synthesis and may therefore play a role in governing the total rate of fatty acid production. Possesses both acetoacetyl-ACP synthase and acetyl transacylase activities. Its substrate specificity determines the biosynthesis of branched-chain and/or straight-chain of fatty acids. The polypeptide is Beta-ketoacyl-[acyl-carrier-protein] synthase III (Bartonella henselae (strain ATCC 49882 / DSM 28221 / CCUG 30454 / Houston 1) (Rochalimaea henselae)).